The sequence spans 224 residues: Ribose-5-phosphate isomerase A (224 aa).

Substrate-binding positions include 26–29 (TGST), 81–84 (DGAD), and 94–97 (KGGG). Residue glutamate 103 is the Proton acceptor of the active site. A substrate-binding site is contributed by lysine 121.

It belongs to the ribose 5-phosphate isomerase family. Homodimer.

The catalysed reaction is aldehydo-D-ribose 5-phosphate = D-ribulose 5-phosphate. It functions in the pathway carbohydrate degradation; pentose phosphate pathway; D-ribose 5-phosphate from D-ribulose 5-phosphate (non-oxidative stage): step 1/1. Catalyzes the reversible conversion of ribose-5-phosphate to ribulose 5-phosphate. This chain is Ribose-5-phosphate isomerase A, found in Listeria innocua serovar 6a (strain ATCC BAA-680 / CLIP 11262).